Consider the following 489-residue polypeptide: Long chain base biosynthesis protein 2b (489 aa).

The chain crosses the membrane as a helical span at residues 2-22; it reads ITIPYLTAVSTYFSYGLLFAF. Position 311 is an N6-(pyridoxal phosphate)lysine (Lys-311).

The protein belongs to the class-II pyridoxal-phosphate-dependent aminotransferase family. Heterodimer with LCB1. Component of the serine palmitoyltransferase (SPT) complex, composed of LCB1 and LCB2 (LCB2a or LCB2b). The cofactor is pyridoxal 5'-phosphate. As to expression, ubiquitous with the highest expression in flowers.

The protein resides in the endoplasmic reticulum membrane. It catalyses the reaction L-serine + hexadecanoyl-CoA + H(+) = 3-oxosphinganine + CO2 + CoA. It functions in the pathway lipid metabolism; sphingolipid metabolism. In terms of biological role, serine palmitoyltransferase (SPT). The heterodimer formed with LCB1 constitutes the catalytic core. Plays an important role during male gametogenesis and embryogenesis. This is Long chain base biosynthesis protein 2b (LCB2b) from Arabidopsis thaliana (Mouse-ear cress).